The chain runs to 419 residues: Serine/threonine-protein kinase Kist (419 aa).

The region spanning Trp-23–Phe-304 is the Protein kinase domain. ATP-binding positions include Leu-29 to Val-37 and Lys-54. Catalysis depends on proton acceptor residues Asp-141 and Asp-158. Residues Arg-324–Leu-406 enclose the RRM domain.

The protein belongs to the protein kinase superfamily. Ser/Thr protein kinase family. Interacts with stathmin, PAM and CDKN1B/p27Kip1.

Its subcellular location is the nucleus. The catalysed reaction is L-seryl-[protein] + ATP = O-phospho-L-seryl-[protein] + ADP + H(+). It catalyses the reaction L-threonyl-[protein] + ATP = O-phospho-L-threonyl-[protein] + ADP + H(+). In terms of biological role, upon serum stimulation, phosphorylates CDKN1B/p27Kip1, thus controlling CDKN1B subcellular location and cell cycle progression in G1 phase. May be involved in trafficking and/or processing of RNA. This chain is Serine/threonine-protein kinase Kist (UHMK1), found in Pongo abelii (Sumatran orangutan).